A 510-amino-acid polypeptide reads, in one-letter code: NAD(P)H-quinone oxidoreductase subunit 2, chloroplastic (510 aa).

Helical transmembrane passes span 28 to 48 (DGSF…LLII), 57 to 77 (IPWL…TLLF), 99 to 119 (IFQF…VEYI), 124 to 144 (MALT…MFLC), 149 to 169 (LITI…LSGY), 183 to 203 (YLLM…WLYG), 227 to 247 (PGIS…LSPA), 295 to 315 (WHLL…LIAI), 323 to 343 (MLAY…IVGD), 354 to 374 (YMLF…LFGL), 395 to 415 (ALSL…AGFF), 418 to 438 (LYLF…IGLL), and 484 to 504 (MIVC…IIAI).

It belongs to the complex I subunit 2 family. In terms of assembly, NDH is composed of at least 16 different subunits, 5 of which are encoded in the nucleus.

Its subcellular location is the plastid. The protein localises to the chloroplast thylakoid membrane. It carries out the reaction a plastoquinone + NADH + (n+1) H(+)(in) = a plastoquinol + NAD(+) + n H(+)(out). It catalyses the reaction a plastoquinone + NADPH + (n+1) H(+)(in) = a plastoquinol + NADP(+) + n H(+)(out). In terms of biological role, NDH shuttles electrons from NAD(P)H:plastoquinone, via FMN and iron-sulfur (Fe-S) centers, to quinones in the photosynthetic chain and possibly in a chloroplast respiratory chain. The immediate electron acceptor for the enzyme in this species is believed to be plastoquinone. Couples the redox reaction to proton translocation, and thus conserves the redox energy in a proton gradient. This chain is NAD(P)H-quinone oxidoreductase subunit 2, chloroplastic, found in Silene latifolia (White campion).